Here is a 421-residue protein sequence, read N- to C-terminus: Core protease I7 homolog (421 aa).

Residues H242, D249, and C329 contribute to the active site.

It belongs to the peptidase C57 family.

The protein localises to the virion. In terms of biological role, late protein responsible for processing most or all of the viral core and membrane proteins known to undergo morphogenesis-associated proteolysis. These proteolytic events are involved in the transformation of immature virions (IV) into mature virions (MV). The chain is Core protease I7 homolog from Fowlpox virus (strain NVSL) (FPV).